An 80-amino-acid polypeptide reads, in one-letter code: Acyl carrier protein (80 aa).

A Carrier domain is found at 4–79; it reads EAILEKVRSI…DAVKYIEDKQ (76 aa). Position 39 is an O-(pantetheine 4'-phosphoryl)serine (serine 39).

This sequence belongs to the acyl carrier protein (ACP) family. Post-translationally, 4'-phosphopantetheine is transferred from CoA to a specific serine of apo-ACP by AcpS. This modification is essential for activity because fatty acids are bound in thioester linkage to the sulfhydryl of the prosthetic group.

The protein localises to the cytoplasm. It functions in the pathway lipid metabolism; fatty acid biosynthesis. Carrier of the growing fatty acid chain in fatty acid biosynthesis. In Prochlorococcus marinus (strain SARG / CCMP1375 / SS120), this protein is Acyl carrier protein.